Consider the following 288-residue polypeptide: Probable proteasome subunit alpha type-7 (288 aa).

Thr2 bears the N-acetylthreonine mark. Residues 247–288 form a disordered region; that stretch reads INGDDDEDEDDSDNVMSSDDENAPVATNANATTDQEGDIHLE. Residues 249-268 show a composition bias toward acidic residues; that stretch reads GDDDEDEDDSDNVMSSDDEN. Residues 269–279 show a composition bias toward low complexity; the sequence is APVATNANATT.

It belongs to the peptidase T1A family. The 26S proteasome consists of a 20S proteasome core and two 19S regulatory subunits. The 20S proteasome core is composed of 28 subunits that are arranged in four stacked rings, resulting in a barrel-shaped structure. The two end rings are each formed by seven alpha subunits, and the two central rings are each formed by seven beta subunits. The catalytic chamber with the active sites is on the inside of the barrel. Post-translationally, the alpha and beta forms are probably products of the same gene with different post-translational modifications.

The protein localises to the cytoplasm. Its subcellular location is the nucleus. In terms of biological role, the proteasome degrades poly-ubiquitinated proteins in the cytoplasm and in the nucleus. It is essential for the regulated turnover of proteins and for the removal of misfolded proteins. The proteasome is a multicatalytic proteinase complex that is characterized by its ability to cleave peptides with Arg, Phe, Tyr, Leu, and Glu adjacent to the leaving group at neutral or slightly basic pH. It has an ATP-dependent proteolytic activity. This Saccharomyces cerevisiae (strain ATCC 204508 / S288c) (Baker's yeast) protein is Probable proteasome subunit alpha type-7 (PRE10).